The chain runs to 44 residues: Cytochrome b559 subunit beta (44 aa).

The helical transmembrane segment at 19 to 35 (WLAIHGLAIPTVFFLGA) threads the bilayer. A heme-binding site is contributed by histidine 23.

This sequence belongs to the PsbE/PsbF family. In terms of assembly, heterodimer of an alpha subunit and a beta subunit. PSII is composed of 1 copy each of membrane proteins PsbA, PsbB, PsbC, PsbD, PsbE, PsbF, PsbH, PsbI, PsbJ, PsbK, PsbL, PsbM, PsbT, PsbX, PsbY, PsbZ, Psb30/Ycf12, at least 3 peripheral proteins of the oxygen-evolving complex and a large number of cofactors. It forms dimeric complexes. Requires heme b as cofactor.

The protein localises to the plastid. It localises to the chloroplast thylakoid membrane. Its function is as follows. This b-type cytochrome is tightly associated with the reaction center of photosystem II (PSII). PSII is a light-driven water:plastoquinone oxidoreductase that uses light energy to abstract electrons from H(2)O, generating O(2) and a proton gradient subsequently used for ATP formation. It consists of a core antenna complex that captures photons, and an electron transfer chain that converts photonic excitation into a charge separation. This is Cytochrome b559 subunit beta from Porphyra purpurea (Red seaweed).